The primary structure comprises 749 residues: G-type lectin S-receptor-like serine/threonine-protein kinase At1g61460 (749 aa).

A signal peptide spans 1–25 (MRITFFASLLLFTNTIFISFSFAIA). A Bulb-type lectin domain is found at 26–145 (GINKESPLSI…FSGRTLWQSF (120 aa)). The Extracellular segment spans residues 26 to 392 (GINKESPLSI…ELGGNKRKKT (367 aa)). N-linked (GlcNAc...) asparagine glycosylation is found at Asn-54, Asn-95, Asn-118, and Asn-135. One can recognise an EGF-like; atypical domain in the interval 247 to 280 (PAHSCDYYGVCGPFGICVKSVCKCFKGFIPKYIE). Intrachain disulfides connect Cys-251/Cys-263 and Cys-257/Cys-268. N-linked (GlcNAc...) asparagine glycans are attached at residues Asn-286, Asn-302, and Asn-341. The 83-residue stretch at 299–381 (CQENSTKKDA…GEILSIRLAR (83 aa)) folds into the PAN domain. Intrachain disulfides connect Cys-334–Cys-355 and Cys-338–Cys-344. A helical transmembrane segment spans residues 393 to 413 (ITASIVSLSLFLILGSTAFGF). Residues 414–749 (WRYRVKHNAS…EMTKSVILGR (336 aa)) are Cytoplasmic-facing. In terms of domain architecture, Protein kinase spans 454-721 (FSLSNKLGQG…DLPSPKQPTF (268 aa)). ATP-binding positions include 460 to 468 (LGQGGFGSV) and Lys-482. The interval 543–560 (RKRLEIDWPKRFDIIQGI) is caM-binding. The Proton acceptor role is filled by Asp-579.

The protein belongs to the protein kinase superfamily. Ser/Thr protein kinase family.

It localises to the cell membrane. The enzyme catalyses L-seryl-[protein] + ATP = O-phospho-L-seryl-[protein] + ADP + H(+). It carries out the reaction L-threonyl-[protein] + ATP = O-phospho-L-threonyl-[protein] + ADP + H(+). The protein is G-type lectin S-receptor-like serine/threonine-protein kinase At1g61460 of Arabidopsis thaliana (Mouse-ear cress).